Consider the following 507-residue polypeptide: Cystathionine beta-synthase (507 aa).

K53 carries the N6-(pyridoxal phosphate)lysine modification. N84 provides a ligand contact to pyridoxal 5'-phosphate. Phosphoserine is present on S134. Residues 196 to 200 (GTGGT) and S289 contribute to the pyridoxal 5'-phosphate site. A phosphoserine mark is found at S350 and S424. The 60-residue stretch at 373–432 (HLKPVVSVKETAKVTDVIKILKDNGFDQLPVLTEDGKLSGLVTLSELLRKLSINNSNNDN) folds into the CBS domain.

The protein belongs to the cysteine synthase/cystathionine beta-synthase family. The cofactor is pyridoxal 5'-phosphate.

The enzyme catalyses L-homocysteine + L-serine = L,L-cystathionine + H2O. The protein operates within amino-acid biosynthesis; L-cysteine biosynthesis; L-cysteine from L-homocysteine and L-serine: step 1/2. In Saccharomyces cerevisiae (strain ATCC 204508 / S288c) (Baker's yeast), this protein is Cystathionine beta-synthase (CYS4).